Reading from the N-terminus, the 123-residue chain is Large ribosomal subunit protein uL14c (123 aa).

The protein belongs to the universal ribosomal protein uL14 family. Part of the 50S ribosomal subunit.

Its subcellular location is the plastid. The protein localises to the chloroplast. In terms of biological role, binds to 23S rRNA. The sequence is that of Large ribosomal subunit protein uL14c from Saccharum hybrid (Sugarcane).